Here is a 178-residue protein sequence, read N- to C-terminus: Cyclin-dependent kinase inhibitor 1B (178 aa).

Over residues methionine 1 to proline 11 the composition is skewed to polar residues. The segment at methionine 1 to asparagine 31 is disordered. Position 10 is a phosphoserine; by UHMK1 (serine 10). The segment at aspartate 51 to proline 91 is interaction with CDK2. Tyrosine 74 is subject to Phosphotyrosine; by SRC. The interval phenylalanine 87–serine 178 is disordered. Tyrosine 88 is modified (phosphotyrosine; by ABL, LYN, SRC and JAK2). Tyrosine 89 carries the post-translational modification Phosphotyrosine. The span at glutamine 104–arginine 113 shows a compositional bias: polar residues. Over residues glutamate 126 to threonine 137 the composition is skewed to basic and acidic residues. Positions lysine 153 to arginine 169 match the Nuclear localization signal motif. The residue at position 157 (threonine 157) is a Phosphothreonine; by CaMK1, PKB/AKT1, RPS6KA1, RPS6KA3 and PIM1. The residue at position 170 (threonine 170) is a Phosphothreonine.

Belongs to the CDI family. In terms of assembly, forms a ternary complex composed of CCNE1, CDK2 and CDKN1B. Interacts directly with CCNE1; the interaction is inhibited by CDK2-dependent phosphorylation. Interacts with COPS5, subunit of the COP9 signalosome complex; the interaction leads to CDKN1B degradation. Interacts with NUP50; the interaction leads to nuclear import and degradation of phosphorylated CDKN1B. Interacts with CCND1 and SNX6. Interacts (Thr-198-phosphorylated form) with 14-3-3 proteins, binds strongly YWHAQ, weakly YWHAE and YWHAH, but not YWHAB nor YWHAZ; the interaction with YWHAQ results in translocation to the cytoplasm. Interacts with AKT1 and LYN; the interactions lead to cytoplasmic mislocation, phosphorylation of CDKN1B and inhibition of cell cycle arrest. Forms a ternary complex with CCNA2 and CDK2; CDKN1B inhibits the kinase activity of CDK2 through conformational rearrangements. Interacts (unphosphorylated form) with CDK2. Forms a complex with CDK2 and SPDYA, but does not directly interact with SPDYA. Forms a ternary complex composed of cyclin D, CDK4 and CDKN1B. Interacts (phosphorylated on Tyr-88 and Tyr-89) with CDK4; the interaction is required for cyclin D and CDK4 complex assembly, induces nuclear translocation and activates the CDK4 kinase activity. Interacts with GRB2. Interacts with PIM1. Identified in a complex with SKP1, SKP2 and CKS1B. Interacts with UHMK1; the interaction leads to cytoplasmic mislocation, phosphorylation of CDKN1B and inhibition of cell cycle arrest. Also interacts with CDK1. Dephosphorylated by PPM1H, leading to CDKN1B stability. Post-translationally, phosphorylated; phosphorylation occurs on serine, threonine and tyrosine residues. Phosphorylation on Ser-10 is the major site of phosphorylation in resting cells, takes place at the G(0)-G(1) phase and leads to protein stability. Phosphorylation on other sites is greatly enhanced by mitogens, growth factors, MYC and in certain cancer cell lines. The phosphorylated form found in the cytoplasm is inactivate. Phosphorylation on Tyr-88 has no effect on binding CDK complexes. Ubiquitinated; in the cytoplasm by the KPC complex (composed of RNF123/KPC1 and UBAC1/KPC2) and, in the nucleus, by SCF(SKP2). The latter requires prior phosphorylation on Thr-187. Ubiquitinated; by a TRIM21-containing SCF(SKP2)-like complex; leads to its degradation. In terms of processing, subject to degradation in the lysosome. Interaction with SNX6 promotes lysosomal degradation.

The protein localises to the nucleus. Its subcellular location is the cytoplasm. It localises to the endosome. In terms of biological role, important regulator of cell cycle progression. Inhibits the kinase activity of CDK2 bound to cyclin A, but has little inhibitory activity on CDK2 bound to SPDYA. Involved in G1 arrest. Potent inhibitor of cyclin E- and cyclin A-CDK2 complexes. Forms a complex with cyclin type D-CDK4 complexes and is involved in the assembly, stability, and modulation of CCND1-CDK4 complex activation. Acts either as an inhibitor or an activator of cyclin type D-CDK4 complexes depending on its phosphorylation state and/or stoichometry. The sequence is that of Cyclin-dependent kinase inhibitor 1B (CDKN1B) from Neovison vison (American mink).